The sequence spans 348 residues: Zinc-type alcohol dehydrogenase-like protein C2E1P3.01 (348 aa).

This sequence belongs to the zinc-containing alcohol dehydrogenase family. Quinone oxidoreductase subfamily.

The protein localises to the mitochondrion. The chain is Zinc-type alcohol dehydrogenase-like protein C2E1P3.01 from Schizosaccharomyces pombe (strain 972 / ATCC 24843) (Fission yeast).